Here is a 378-residue protein sequence, read N- to C-terminus: Probable G-protein coupled receptor frpr-1 (378 aa).

The next 7 helical transmembrane spans lie at 47-67 (LVVI…GNAL), 85-105 (LFAL…LFFL), 120-140 (AVLS…SVFI), 180-200 (VIVC…YNSP), 243-263 (TIVM…AIVI), 277-297 (IITL…PLTV), and 315-337 (SNLM…GSNF).

This sequence belongs to the G-protein coupled receptor 1 family.

It is found in the cell membrane. The chain is Probable G-protein coupled receptor frpr-1 from Caenorhabditis elegans.